Reading from the N-terminus, the 410-residue chain is Glycylpeptide N-tetradecanoyltransferase (410 aa).

Tetradecanoyl-CoA-binding residues include phenylalanine 30, tryptophan 31, phenylalanine 162, leucine 163, cysteine 164, valine 165, serine 171, arginine 173, leucine 174, and alanine 175.

It belongs to the NMT family. Heterodimer composed of NMT and AK2; AK2 myristoylation stabilizes the complex.

It localises to the cytoplasm. The catalysed reaction is N-terminal glycyl-[protein] + tetradecanoyl-CoA = N-tetradecanoylglycyl-[protein] + CoA + H(+). In terms of biological role, adds a myristoyl group to the N-terminal glycine residue of certain cellular proteins. Myristoylates adenylate kinase AK2. During the asexual blood stage, may myristoylate proteins such as ARO, CDPK1 and GAP45. Probably by mediating protein myristoylation, plays a role in the assembly of the inner membrane complex during the early stages of schizogony and in the formation of rhoptries in the late stages and thus merozoite egress. The chain is Glycylpeptide N-tetradecanoyltransferase from Plasmodium falciparum (isolate 3D7).